Here is a 936-residue protein sequence, read N- to C-terminus: Protein SIEL (936 aa).

As to quaternary structure, interacts with SHR, MGP, SCR, JKD, CPC, TMO7 and AGL21, but not with LFY or STM.

Its subcellular location is the nucleus. It localises to the endosome. The protein localises to the cytoplasm. It is found in the cell cortex. Its function is as follows. Intracellular shuttle that promotes movement of SHR from the stele into the endodermis. Required for SHR association to endosomes and localization, and for intercellular movement of SHR. This chain is Protein SIEL, found in Arabidopsis thaliana (Mouse-ear cress).